A 162-amino-acid polypeptide reads, in one-letter code: Transcription elongation factor GreA (162 aa).

The stretch at 48–76 forms a coiled coil; it reads NSEYQSAKDEQAFVEGRVKQLQQMIQFAQ. The segment at 111 to 132 is disordered; sequence GSAESDPLSGKISNDSPMGKAL.

This sequence belongs to the GreA/GreB family.

Necessary for efficient RNA polymerase transcription elongation past template-encoded arresting sites. The arresting sites in DNA have the property of trapping a certain fraction of elongating RNA polymerases that pass through, resulting in locked ternary complexes. Cleavage of the nascent transcript by cleavage factors such as GreA or GreB allows the resumption of elongation from the new 3'terminus. GreA releases sequences of 2 to 3 nucleotides. The chain is Transcription elongation factor GreA from Oenococcus oeni (strain ATCC BAA-331 / PSU-1).